The sequence spans 366 residues: Protein-glutamate methylesterase/protein-glutamine glutaminase (366 aa).

The 119-residue stretch at 5–123 folds into the Response regulatory domain; that stretch reads RVLVVDDSVV…SVGRSMEQVR (119 aa). Aspartate 56 carries the 4-aspartylphosphate modification. The 193-residue stretch at 163-355 folds into the CheB-type methylesterase domain; sequence PLGGHRLLVI…PEILRRLARQ (193 aa). Active-site residues include serine 175, histidine 201, and aspartate 297.

Belongs to the CheB family. In terms of processing, phosphorylated by CheA. Phosphorylation of the N-terminal regulatory domain activates the methylesterase activity.

The protein localises to the cytoplasm. It carries out the reaction [protein]-L-glutamate 5-O-methyl ester + H2O = L-glutamyl-[protein] + methanol + H(+). It catalyses the reaction L-glutaminyl-[protein] + H2O = L-glutamyl-[protein] + NH4(+). Its function is as follows. Involved in chemotaxis. Part of a chemotaxis signal transduction system that modulates chemotaxis in response to various stimuli. Catalyzes the demethylation of specific methylglutamate residues introduced into the chemoreceptors (methyl-accepting chemotaxis proteins or MCP) by CheR. Also mediates the irreversible deamidation of specific glutamine residues to glutamic acid. This Nocardioides sp. (strain ATCC BAA-499 / JS614) protein is Protein-glutamate methylesterase/protein-glutamine glutaminase.